The following is a 374-amino-acid chain: Tetraacyldisaccharide 4'-kinase (374 aa).

66–73 (TAGGTGKT) lines the ATP pocket.

Belongs to the LpxK family.

It catalyses the reaction a lipid A disaccharide + ATP = a lipid IVA + ADP + H(+). The protein operates within glycolipid biosynthesis; lipid IV(A) biosynthesis; lipid IV(A) from (3R)-3-hydroxytetradecanoyl-[acyl-carrier-protein] and UDP-N-acetyl-alpha-D-glucosamine: step 6/6. In terms of biological role, transfers the gamma-phosphate of ATP to the 4'-position of a tetraacyldisaccharide 1-phosphate intermediate (termed DS-1-P) to form tetraacyldisaccharide 1,4'-bis-phosphate (lipid IVA). The polypeptide is Tetraacyldisaccharide 4'-kinase (Syntrophus aciditrophicus (strain SB)).